The chain runs to 83 residues: CLAVATA3/ESR (CLE)-related protein 3 (83 aa).

The N-terminal stretch at 1 to 24 (MASLKLWVCLVLLLVLELTSVHEC) is a signal peptide. A coiled-coil region spans residues 38–58 (RLKKIRRELFERLKEMKGRSE). Positions 53–83 (MKGRSEGEETILGNTLDSKRLSPGGPDPRHH) are disordered. Hydroxyproline is present on residues Pro75 and Pro78. An O-linked (Ara...) hydroxyproline glycan is attached at Pro78.

This sequence belongs to the CLV3/ESR signal peptide family. Post-translationally, the O-glycosylation (arabinosylation) of the hydroxyproline Pro-78 enhances binding affinity of the CLE3p peptide for its receptor. As to expression, mostly expressed in roots, stems and apex, and, to a lower extent, in seedlings, leaves, flowers, siliques and pollen.

The protein localises to the secreted. The protein resides in the extracellular space. Functionally, extracellular signal peptide that regulates cell fate. This is CLAVATA3/ESR (CLE)-related protein 3 from Arabidopsis thaliana (Mouse-ear cress).